A 285-amino-acid chain; its full sequence is Diaminopimelate epimerase (285 aa).

Substrate-binding residues include N15 and N68. C77 functions as the Proton donor in the catalytic mechanism. Residues G78–N79, N165, N201, and E219–R220 contribute to the substrate site. C228 functions as the Proton acceptor in the catalytic mechanism. G229–T230 provides a ligand contact to substrate.

It belongs to the diaminopimelate epimerase family. As to quaternary structure, homodimer.

The protein resides in the cytoplasm. The catalysed reaction is (2S,6S)-2,6-diaminopimelate = meso-2,6-diaminopimelate. The protein operates within amino-acid biosynthesis; L-lysine biosynthesis via DAP pathway; DL-2,6-diaminopimelate from LL-2,6-diaminopimelate: step 1/1. Its function is as follows. Catalyzes the stereoinversion of LL-2,6-diaminopimelate (L,L-DAP) to meso-diaminopimelate (meso-DAP), a precursor of L-lysine and an essential component of the bacterial peptidoglycan. In Synechococcus sp. (strain JA-2-3B'a(2-13)) (Cyanobacteria bacterium Yellowstone B-Prime), this protein is Diaminopimelate epimerase.